Reading from the N-terminus, the 339-residue chain is tRNA N6-adenosine threonylcarbamoyltransferase (339 aa).

Positions 111 and 115 each coordinate Fe cation. Substrate-binding positions include 139–143 (LVSGG), D172, G185, D189, and N280. D308 serves as a coordination point for Fe cation.

It belongs to the KAE1 / TsaD family. Fe(2+) is required as a cofactor.

The protein resides in the cytoplasm. It carries out the reaction L-threonylcarbamoyladenylate + adenosine(37) in tRNA = N(6)-L-threonylcarbamoyladenosine(37) in tRNA + AMP + H(+). Functionally, required for the formation of a threonylcarbamoyl group on adenosine at position 37 (t(6)A37) in tRNAs that read codons beginning with adenine. Is involved in the transfer of the threonylcarbamoyl moiety of threonylcarbamoyl-AMP (TC-AMP) to the N6 group of A37, together with TsaE and TsaB. TsaD likely plays a direct catalytic role in this reaction. The polypeptide is tRNA N6-adenosine threonylcarbamoyltransferase (Bacteroides thetaiotaomicron (strain ATCC 29148 / DSM 2079 / JCM 5827 / CCUG 10774 / NCTC 10582 / VPI-5482 / E50)).